A 306-amino-acid chain; its full sequence is Aspartate carbamoyltransferase catalytic subunit (306 aa).

Arginine 55 and threonine 56 together coordinate carbamoyl phosphate. Lysine 84 lines the L-aspartate pocket. 3 residues coordinate carbamoyl phosphate: arginine 105, histidine 133, and glutamine 136. Residues arginine 166 and arginine 227 each coordinate L-aspartate. The carbamoyl phosphate site is built by leucine 265 and proline 266.

It belongs to the aspartate/ornithine carbamoyltransferase superfamily. ATCase family. Heterododecamer (2C3:3R2) of six catalytic PyrB chains organized as two trimers (C3), and six regulatory PyrI chains organized as three dimers (R2).

The enzyme catalyses carbamoyl phosphate + L-aspartate = N-carbamoyl-L-aspartate + phosphate + H(+). The protein operates within pyrimidine metabolism; UMP biosynthesis via de novo pathway; (S)-dihydroorotate from bicarbonate: step 2/3. In terms of biological role, catalyzes the condensation of carbamoyl phosphate and aspartate to form carbamoyl aspartate and inorganic phosphate, the committed step in the de novo pyrimidine nucleotide biosynthesis pathway. The sequence is that of Aspartate carbamoyltransferase catalytic subunit from Aeromonas hydrophila subsp. hydrophila (strain ATCC 7966 / DSM 30187 / BCRC 13018 / CCUG 14551 / JCM 1027 / KCTC 2358 / NCIMB 9240 / NCTC 8049).